Here is a 518-residue protein sequence, read N- to C-terminus: Type II methyltransferase M.HindII (518 aa).

Belongs to the N(4)/N(6)-methyltransferase family.

The catalysed reaction is a 2'-deoxyadenosine in DNA + S-adenosyl-L-methionine = an N(6)-methyl-2'-deoxyadenosine in DNA + S-adenosyl-L-homocysteine + H(+). A gamma subtype methylase, recognizes the double-stranded sequence 5'-GTYRAC-3', methylates A-5 on both strands, and protects the DNA from cleavage by the HindII endonuclease. In Haemophilus influenzae (strain ATCC 51907 / DSM 11121 / KW20 / Rd), this protein is Type II methyltransferase M.HindII (hindIIM).